Here is a 191-residue protein sequence, read N- to C-terminus: UPF0312 protein Shewmr4_1178 (191 aa).

The signal sequence occupies residues 1–22 (MKKQLLAALIGGSLLAPMAASA).

Belongs to the UPF0312 family. Type 1 subfamily.

It localises to the periplasm. In Shewanella sp. (strain MR-4), this protein is UPF0312 protein Shewmr4_1178.